A 153-amino-acid chain; its full sequence is Calmodulin-like protein 4 (153 aa).

EF-hand domains follow at residues 8-43 (DAIQ…LGTC), 44-79 (PTPG…QQKQ), 81-116 (DPEN…MGEK), and 117-152 (LTPE…PVPD).

This sequence belongs to the calmodulin family. In terms of assembly, associates with the IMAC/intermicrovillar adhesion complex.

It localises to the cell projection. The protein resides in the microvillus. Its function is as follows. As part of the intermicrovillar adhesion complex/IMAC plays a role in epithelial brush border differentiation, controlling microvilli organization and length. Acts as a light chain for MYO7B and is required for efficient targeting of the IMAC to the tips of border brush microvilli. This chain is Calmodulin-like protein 4 (calml4), found in Xenopus tropicalis (Western clawed frog).